The following is a 129-amino-acid chain: Protein Turandot A1 (129 aa).

The first 21 residues, 1-21 (MNSSTALMCFALLLISPLCMG), serve as a signal peptide directing secretion. The N-linked (GlcNAc...) asparagine glycan is linked to N49.

This sequence belongs to the Turandot family.

It localises to the secreted. Functionally, a humoral factor that plays a role in stress tolerance; gives increased resistance to the lethal effects of bacterial challenge and stress. Regulated by the JAK/STAT pathway and NF-KB-like Relish pathway in the fat body, upd3 in the hemocytes and Mekk1 in response to septic injury and consequent immune response. This chain is Protein Turandot A1 (TotA1), found in Drosophila simulans (Fruit fly).